Here is a 390-residue protein sequence, read N- to C-terminus: cAMP-dependent protein kinase regulatory subunit (390 aa).

A compositionally biased stretch (polar residues) spans 1-17 (MSASGFTSPFGANSNPF). The segment at 1–81 (MSASGFTSPF…RPQNPDGYPA (81 aa)) is disordered. The segment at 1–129 (MSASGFTSPF…RLKKAIQGNF (129 aa)) is dimerization and phosphorylation. S90 bears the Phosphoserine mark. 3',5'-cyclic AMP contacts are provided by residues 130-261 (LFSH…EEVP), E208, R217, 262-383 (ILST…GVEE), E329, and R338.

This sequence belongs to the cAMP-dependent kinase regulatory chain family. As to quaternary structure, tetramer, composed of 2 regulatory (R) and 2 catalytic (C) subunits. In the presence of cAMP it dissociates into 2 active monomeric C subunits and an R dimer.

This chain is cAMP-dependent protein kinase regulatory subunit (SUM1), found in Pyricularia oryzae (strain 70-15 / ATCC MYA-4617 / FGSC 8958) (Rice blast fungus).